The sequence spans 405 residues: Tryptophan synthase beta chain (405 aa).

An N6-(pyridoxal phosphate)lysine modification is found at lysine 95.

The protein belongs to the TrpB family. Tetramer of two alpha and two beta chains. The cofactor is pyridoxal 5'-phosphate.

It carries out the reaction (1S,2R)-1-C-(indol-3-yl)glycerol 3-phosphate + L-serine = D-glyceraldehyde 3-phosphate + L-tryptophan + H2O. It functions in the pathway amino-acid biosynthesis; L-tryptophan biosynthesis; L-tryptophan from chorismate: step 5/5. In terms of biological role, the beta subunit is responsible for the synthesis of L-tryptophan from indole and L-serine. In Pseudomonas putida (strain W619), this protein is Tryptophan synthase beta chain.